Reading from the N-terminus, the 282-residue chain is Benzoyl-CoA reductase subunit D (282 aa).

Residues Cys130 and Cys169 each coordinate [4Fe-4S] cluster.

In terms of assembly, heterotetramer composed of A, B, C, and D subunits. It depends on [4Fe-4S] cluster as a cofactor.

It carries out the reaction cyclohexa-1,5-diene-1-carbonyl-CoA + oxidized 2[4Fe-4S]-[ferredoxin] + 2 ADP + 2 phosphate = reduced 2[4Fe-4S]-[ferredoxin] + benzoyl-CoA + 2 ATP + 2 H2O. The catalysed reaction is 3-hydroxybenzoyl-CoA + AH2 + 2 ATP + 2 H2O = 3-hydroxycyclohexa-1,5-diene-1-carbonyl-CoA + A + 2 ADP + 2 phosphate + 2 H(+). Catalyzes the anaerobic reduction of benzoyl-CoA and 3-hydroxybenzoyl-CoA to form cyclohexa-1,5-diene-1-carbonyl-CoA and 3-hydroxycyclohexa-1,5-diene-1-carbonyl-CoA, respectively. The enzyme also reduces other benzoyl-CoA analogs with small substituents at the aromatic ring. The protein is Benzoyl-CoA reductase subunit D (bcrD) of Thauera aromatica.